Here is a 759-residue protein sequence, read N- to C-terminus: Xaa-Pro dipeptidyl-peptidase (759 aa).

Active-site charge relay system residues include Ser347, Asp467, and His497.

It belongs to the peptidase S15 family. As to quaternary structure, homodimer.

It is found in the cytoplasm. The enzyme catalyses Hydrolyzes Xaa-Pro-|- bonds to release unblocked, N-terminal dipeptides from substrates including Ala-Pro-|-p-nitroanilide and (sequentially) Tyr-Pro-|-Phe-Pro-|-Gly-Pro-|-Ile.. Functionally, removes N-terminal dipeptides sequentially from polypeptides having unsubstituted N-termini provided that the penultimate residue is proline. This chain is Xaa-Pro dipeptidyl-peptidase, found in Streptococcus gordonii (strain Challis / ATCC 35105 / BCRC 15272 / CH1 / DL1 / V288).